Reading from the N-terminus, the 338-residue chain is Aspartate carbamoyltransferase catalytic subunit (338 aa).

2 residues coordinate carbamoyl phosphate: R71 and T72. Residue K99 participates in L-aspartate binding. Carbamoyl phosphate contacts are provided by R121, H151, and Q154. Residues R184 and R239 each contribute to the L-aspartate site. Carbamoyl phosphate contacts are provided by G280 and P281.

It belongs to the aspartate/ornithine carbamoyltransferase superfamily. ATCase family. As to quaternary structure, heterododecamer (2C3:3R2) of six catalytic PyrB chains organized as two trimers (C3), and six regulatory PyrI chains organized as three dimers (R2).

It carries out the reaction carbamoyl phosphate + L-aspartate = N-carbamoyl-L-aspartate + phosphate + H(+). It participates in pyrimidine metabolism; UMP biosynthesis via de novo pathway; (S)-dihydroorotate from bicarbonate: step 2/3. Its function is as follows. Catalyzes the condensation of carbamoyl phosphate and aspartate to form carbamoyl aspartate and inorganic phosphate, the committed step in the de novo pyrimidine nucleotide biosynthesis pathway. This is Aspartate carbamoyltransferase catalytic subunit from Stutzerimonas stutzeri (strain A1501) (Pseudomonas stutzeri).